Consider the following 72-residue polypeptide: SRY-related protein AES4 (72 aa).

Positions 1-69 (VKRPMNAFMV…KHMADYPDYK (69 aa)) form a DNA-binding region, HMG box.

The protein localises to the nucleus. The chain is SRY-related protein AES4 from Alligator mississippiensis (American alligator).